A 148-amino-acid chain; its full sequence is Large ribosomal subunit protein bL9 (148 aa).

This sequence belongs to the bacterial ribosomal protein bL9 family.

In terms of biological role, binds to the 23S rRNA. The polypeptide is Large ribosomal subunit protein bL9 (Pseudomonas savastanoi pv. phaseolicola (strain 1448A / Race 6) (Pseudomonas syringae pv. phaseolicola (strain 1448A / Race 6))).